The chain runs to 325 residues: Holliday junction branch migration complex subunit RuvB (325 aa).

Residues 1–181 (MENRLINPVE…FGIVQRLEFY (181 aa)) are large ATPase domain (RuvB-L). ATP contacts are provided by residues isoleucine 20, arginine 21, glycine 62, lysine 65, threonine 66, threonine 67, 128 to 130 (EDF), arginine 171, tyrosine 181, and arginine 218. Position 66 (threonine 66) interacts with Mg(2+). The small ATPAse domain (RuvB-S) stretch occupies residues 182-252 (NIEDLTTIVS…IADSALDMLA (71 aa)). A head domain (RuvB-H) region spans residues 255–325 (RRGLDHLDRR…VLTQMAIDQL (71 aa)). 3 residues coordinate DNA: arginine 291, arginine 310, and arginine 315.

This sequence belongs to the RuvB family. As to quaternary structure, homohexamer. Forms an RuvA(8)-RuvB(12)-Holliday junction (HJ) complex. HJ DNA is sandwiched between 2 RuvA tetramers; dsDNA enters through RuvA and exits via RuvB. An RuvB hexamer assembles on each DNA strand where it exits the tetramer. Each RuvB hexamer is contacted by two RuvA subunits (via domain III) on 2 adjacent RuvB subunits; this complex drives branch migration. In the full resolvosome a probable DNA-RuvA(4)-RuvB(12)-RuvC(2) complex forms which resolves the HJ.

It localises to the cytoplasm. The enzyme catalyses ATP + H2O = ADP + phosphate + H(+). Functionally, the RuvA-RuvB-RuvC complex processes Holliday junction (HJ) DNA during genetic recombination and DNA repair, while the RuvA-RuvB complex plays an important role in the rescue of blocked DNA replication forks via replication fork reversal (RFR). RuvA specifically binds to HJ cruciform DNA, conferring on it an open structure. The RuvB hexamer acts as an ATP-dependent pump, pulling dsDNA into and through the RuvAB complex. RuvB forms 2 homohexamers on either side of HJ DNA bound by 1 or 2 RuvA tetramers; 4 subunits per hexamer contact DNA at a time. Coordinated motions by a converter formed by DNA-disengaged RuvB subunits stimulates ATP hydrolysis and nucleotide exchange. Immobilization of the converter enables RuvB to convert the ATP-contained energy into a lever motion, pulling 2 nucleotides of DNA out of the RuvA tetramer per ATP hydrolyzed, thus driving DNA branch migration. The RuvB motors rotate together with the DNA substrate, which together with the progressing nucleotide cycle form the mechanistic basis for DNA recombination by continuous HJ branch migration. Branch migration allows RuvC to scan DNA until it finds its consensus sequence, where it cleaves and resolves cruciform DNA. This Psychrobacter sp. (strain PRwf-1) protein is Holliday junction branch migration complex subunit RuvB.